Consider the following 405-residue polypeptide: MIDPVQTKRHSDENLKEWKIRICSNKDIYNLNWEEIKELINKETGESKGESAYRKWFNNFIEGVEYQRERSDESNNSLLELELKKVEIMEERKKLQAVKHEIHKNTRVKGRTELLYENVTEAIEKVGTLPPPSFYPLNKNERKRAAVLGFGDEHFGKQFKSNNNEYNEQIYLQRMNQILSETVEYIQKENLDELVVLNGADSVEGMALRVSQLTALQYGFIDQVIKYSRYKAEWLLELSKHVKIKYIHIPSANHTELRLHNTNRSEMPKEDVERIIATYIHDVLKDNERIEVPLYDEGIVDFKLLEFEIVACHGHQIKNKKNAIRDISQMKRKFYDYMYISHFHHGNMLTVGEAATHNIQVIQLPSVMGSDEYSDSLMTGAKAGANLSIYESGKGRIIQYDYILN.

A coiled-coil region spans residues 72-101; that stretch reads DESNNSLLELELKKVEIMEERKKLQAVKHE.

The polypeptide is SPbeta prophage-derived uncharacterized protein YonJ (yonJ) (Bacillus subtilis (strain 168)).